The chain runs to 296 residues: MPELPEVETVKRGLTPAMEGTRVTRLELRRGDLRFPFPDAFADRVSGRTIVGLGRRAKYLLVDLDDGNTLISHLGMSGSFRIEEGAASGVPGEFHHARSKDEKHDHVVFHLQAASGLRRVVYNDPRRFGFMDMVGRADLATHPFFRDLGPEPTGNELSAAYLAERFRDKAQPLKSALLDQKNIAGLGNIYVCEALWRSHLSPIRAAGTLVTAGGRPKAQLDLLVASIRDVIADAIAAGGSSLRDHIQTDGSLGYFQHSFSVYDRESQACRTPGCGGTVARIVQAGRSTFYCATCQK.

Proline 2 (schiff-base intermediate with DNA) is an active-site residue. Glutamate 3 acts as the Proton donor in catalysis. Residue lysine 58 is the Proton donor; for beta-elimination activity of the active site. DNA is bound by residues histidine 104, arginine 126, and lysine 169. An FPG-type zinc finger spans residues 260–296 (SVYDRESQACRTPGCGGTVARIVQAGRSTFYCATCQK). Residue arginine 286 is the Proton donor; for delta-elimination activity of the active site.

This sequence belongs to the FPG family. Monomer. Zn(2+) is required as a cofactor.

It catalyses the reaction Hydrolysis of DNA containing ring-opened 7-methylguanine residues, releasing 2,6-diamino-4-hydroxy-5-(N-methyl)formamidopyrimidine.. The enzyme catalyses 2'-deoxyribonucleotide-(2'-deoxyribose 5'-phosphate)-2'-deoxyribonucleotide-DNA = a 3'-end 2'-deoxyribonucleotide-(2,3-dehydro-2,3-deoxyribose 5'-phosphate)-DNA + a 5'-end 5'-phospho-2'-deoxyribonucleoside-DNA + H(+). Involved in base excision repair of DNA damaged by oxidation or by mutagenic agents. Acts as a DNA glycosylase that recognizes and removes damaged bases. Has a preference for oxidized purines, such as 7,8-dihydro-8-oxoguanine (8-oxoG). Has AP (apurinic/apyrimidinic) lyase activity and introduces nicks in the DNA strand. Cleaves the DNA backbone by beta-delta elimination to generate a single-strand break at the site of the removed base with both 3'- and 5'-phosphates. This is Formamidopyrimidine-DNA glycosylase from Rhizobium johnstonii (strain DSM 114642 / LMG 32736 / 3841) (Rhizobium leguminosarum bv. viciae).